Reading from the N-terminus, the 172-residue chain is Acetolactate synthase small subunit (172 aa).

The ACT domain maps to 4–78; sequence TLSVLVEDEA…NILKVDNITE (75 aa).

Belongs to the acetolactate synthase small subunit family. As to quaternary structure, dimer of large and small chains.

The protein resides in the plastid. It localises to the chloroplast. The enzyme catalyses 2 pyruvate + H(+) = (2S)-2-acetolactate + CO2. Its pathway is amino-acid biosynthesis; L-isoleucine biosynthesis; L-isoleucine from 2-oxobutanoate: step 1/4. It participates in amino-acid biosynthesis; L-valine biosynthesis; L-valine from pyruvate: step 1/4. The sequence is that of Acetolactate synthase small subunit (ilvH) from Cyanidium caldarium (Red alga).